Here is a 471-residue protein sequence, read N- to C-terminus: UDP-N-acetylmuramate--L-alanine ligase (471 aa).

An ATP-binding site is contributed by 114-120 (GTHGKTT).

Belongs to the MurCDEF family.

The protein localises to the cytoplasm. It catalyses the reaction UDP-N-acetyl-alpha-D-muramate + L-alanine + ATP = UDP-N-acetyl-alpha-D-muramoyl-L-alanine + ADP + phosphate + H(+). It functions in the pathway cell wall biogenesis; peptidoglycan biosynthesis. Its function is as follows. Cell wall formation. The sequence is that of UDP-N-acetylmuramate--L-alanine ligase from Methylobacterium nodulans (strain LMG 21967 / CNCM I-2342 / ORS 2060).